Reading from the N-terminus, the 1138-residue chain is MDNLQWKYDMAGIKSAREQGYRRKIVARDISVSTGAKQYAYLLPPMYNLFLKQVHEKRDKNLYEVIDEKSPVRLYFDCDSFDRDEGGYGLDLDCKTSLKLFHDLLKNFILFLNPNSTANMKAHITRCIRQDKPNKHSFHAIYPGIVFKNINELKMFVLSFAYHLFEDKNDMRLAFKKQGKNKTLGRAFFDLAVYTKDRCFRLPFQSKKGDSAKLIPLREITLEEIENNICQPEDFVRKPDNVDTSIGDLLSAAVMEKYTGVKLSTYVRAYQEGVIKEKIKTKCIEKRNGSKKIKITTPRLEIEWDQMKIPGVETVEIREDKDFLQYFDPVELRGGFYSLYIHLLKDICYFLPDEVLKQWMGHTNDKKANYLIKSNRKKGAEYAMTGGYALELLAKIYGRCNVRDLRDPIPKPTNSFRNTTRINVTPDRWRPIEVSDMKKFFIDSQVRDLKTNTYNDCGMITAMADVDYGEKIALSKKLKMDTKKKCQFITGQMGASKSTGVMDYMVFSMISSIIANAMVIVPRCSLAGQTVKKIYNTYKEMISDKDRMKKIKNKRKIVINPYFSQAFTIGGLQEIYDELTSEITTTDTCGTICVCVLNSISKVRSHVFDTIIMDEPVTCVDNFYIDSEKKQKIPVKNILEKKGNTIAVTDLMIDMLMKITRNANQLIFIDAAFTEDVIRLCETLYWGAYTMQGTVDDWRKVLENEGVDQSNIRHKIKRIKDENILIRKWIQNKKEWNYDKKTDTRTIISTTEIDHFRLFRPIEYICVYDKKITRPIYTHIIKYDCKQTMMNKLLDDVREGKKLVVYCSVGKETASIINTINSMTSRECIVLPKVGGVTAKSLKGKENQLDEYMRSMEVVVVSSVLGTGTSYPEEGLFDAAYMFCKVTYGTPQISDMIQLSARVRATTTRTLHYHITTSTSGHKPNGDALKNSDYHGISFKDHLDKTYTSRDHLHRVHMSRPSLASEFMRNELQQSFGHVIDETLEKKLPTHETNSEIEKEKHSDGKRKESKMAQEIDKHHPDVYTDVMATSNRNMTDEDGTKYQTIVRHCVVRTNNTTEPDRTMDVDWDSSQGTSGEIFHRPVTVDRSRITEQLVATPGPSTSRKRKLSDDDEYEKYDSGIEDIETDVDEEEEVQNKL.

Disordered stretches follow at residues 985–1015 and 1094–1138; these read EKKL…MAQE and LVAT…QNKL. Over residues 1110–1138 the composition is skewed to acidic residues; that stretch reads DDDEYEKYDSGIEDIETDVDEEEEVQNKL.

This is an uncharacterized protein from Ostreid herpesvirus 1 (isolate France) (OsHV-1).